The primary structure comprises 1235 residues: Insulin receptor substrate 1 (1235 aa).

Position 3 is a phosphoserine (Ser-3). Residues 3 to 133 (SPPDTDGFSD…AGGGCGGSCS (131 aa)) form a mediates interaction with PHIP region. Residues 12–115 (DVRKVGYLRK…WYQALLQLHN (104 aa)) enclose the PH domain. Phosphoserine; by CK2 is present on Ser-99. Positions 155 to 259 (FKEVWQVILK…EAMRAMSDEF (105 aa)) constitute an IRS-type PTB domain. The segment at 258-425 (EFRPRTKSQS…SDGGFISSDE (168 aa)) is disordered. Phosphoserine; by RPS6KB1 is present on residues Ser-265 and Ser-302. Low complexity predominate over residues 265–276 (SQSSSSCSNPIS). The residue at position 307 (Ser-307) is a Phosphoserine; by IKKB, MAPK8 and RPS6KB1. Phosphoserine is present on residues Ser-318, Ser-325, Ser-340, and Ser-343. Over residues 349–358 (THAHRHRGSS) the composition is skewed to basic residues. Composition is skewed to low complexity over residues 378–399 (SPSATSPVSLSSSSTSGHGSTS) and 407–419 (SSASVSGSPSDGG). Ser-414 bears the Phosphoserine mark. Thr-441 and Thr-448 each carry phosphothreonine. Tyr-460 is modified (phosphotyrosine; by INSR). Positions 460 to 463 (YICM) match the YXXM motif 1 motif. Thr-502 is subject to Phosphothreonine; by CK2. Residues 520–539 (THSAGTSPTISHQKTPSQSS) are disordered. Position 522 is a phosphoserine; by RPS6KB1 (Ser-522). Over residues 522–539 (SAGTSPTISHQKTPSQSS) the composition is skewed to polar residues. Short sequence motifs (YXXM motif) lie at residues 546 to 549 (YTEM) and 608 to 611 (YMPM). Tyr-608 bears the Phosphotyrosine; by INSR mark. Ser-612 is subject to Phosphoserine. Tyr-628 is modified (phosphotyrosine; by INSR). A YXXM motif 4 motif is present at residues 628-631 (YMPM). Ser-632 is modified (phosphoserine; by RPS6KB1 and ROCK2). Tyr-658 is subject to Phosphotyrosine. Residues 658 to 661 (YMMM) carry the YXXM motif 5 motif. Residues 669 to 689 (PDIGGGSCSSSSISAAPSGSS) show a composition bias toward low complexity. The tract at residues 669 to 720 (PDIGGGSCSSSSISAAPSGSSYGKPWTNGVGGHHTHALPHAKPPVESGGGKL) is disordered. Residues 727–730 (YMNM) carry the YXXM motif 6 motif. The tract at residues 766-921 (FKHTQRPGEP…ATSRSSPSVR (156 aa)) is disordered. A compositionally biased stretch (basic and acidic residues) spans 771–780 (RPGEPEEGAR). 3 stretches are compositionally biased toward low complexity: residues 785–794 (RLSSSSGRLR), 801–810 (DSSSSTSSDS), and 872–881 (QQQQQQQQQQ). A Phosphoserine; by AMPK and SIK2 modification is found at Ser-789. The residue at position 891 (Ser-891) is a Phosphoserine. A phosphotyrosine; by INSR mark is found at Tyr-895, Tyr-939, and Tyr-987. The interval 895-897 (YVN) is GRB2-binding. 3 short sequence motifs (YXXM motif) span residues 939–942 (YMNM), 987–990 (YMTM), and 1010–1013 (YADM). Residues 1024 to 1165 (LPRTTGAAPP…SAPGCGAAGG (142 aa)) are disordered. Positions 1025-1046 (PRTTGAAPPPSSTASASASVTP) are enriched in low complexity. A compositionally biased stretch (polar residues) spans 1072-1084 (TRVNLSPNHNQSA). Ser-1099 is modified (phosphoserine). Ser-1100 is modified (phosphoserine; by RPS6KB1). Positions 1101–1114 (ETFSAPTRAANTVS) are enriched in polar residues. Gly residues predominate over residues 1118–1128 (GAAGGGSGGGS). Position 1172 is a phosphotyrosine; by INSR (Tyr-1172). The interval 1177 to 1235 (LVKDVKQHPQDCPSQQQSLPPPPPHQPLGSNEGSSPRRSSEDLSTYASINFQKQPEDRQ) is disordered. A Glycyl lysine isopeptide (Lys-Gly) (interchain with G-Cter in ubiquitin) cross-link involves residue Lys-1179. Polar residues predominate over residues 1204–1229 (LGSNEGSSPRRSSEDLSTYASINFQK). Phosphotyrosine; by INSR is present on Tyr-1222.

As to quaternary structure, interacts with SOCS7. Interacts (via IRS-type PTB domain) with IGF1R and INSR (via the tyrosine-phosphorylated NPXY motif). Interacts with UBTF, FER and PIK3CA. Interacts (via phosphorylated YXXM motifs) with PIK3R1. Interacts with ROCK1. Interacts (via PH domain) with PHIP. Interacts with GRB2. Interacts with ALK. Interacts with EIF2AK2/PKR. Interacts with GKAP1. Interacts with DGKZ in the absence of insulin; insulin stimulation decreases this interaction. Found in a ternary complex with DGKZ and PIP5K1A in the absence of insulin stimulation. Interacts with SQSTM1; the interaction is disrupted by the presence of tensin TNS2. Interacts with NCK1 (via SH2 domain). Interacts with NCK2 (via SH3 domain). Interacts with SH2B1; this interaction enhances leptin-induced activation of the PI3-kinase pathway. Interacts with DVL2; this interaction promotes the Wnt/beta-catenin signaling pathway. Interacts with JAK1. Post-translationally, serine phosphorylation of IRS1 is a mechanism for insulin resistance. Ser-307 phosphorylation inhibits insulin action through disruption of IRS1 interaction with the insulin receptor, and Ser-789 phosphorylation is increased in the liver of insulin-resistant rats. Phosphorylation of Tyr-895 is required for GRB2-binding. Phosphorylated by ALK. Phosphorylated at Ser-265, Ser-302, Ser-632 and Ser-1100 by RPS6KB1; phosphorylation induces accelerated degradation of IRS1. Phosphorylated on tyrosine residues in response to insulin. In skeletal muscles, dephosphorylated on Tyr-608 by TNS2 under anabolic conditions; dephosphorylation results in the proteasomal degradation of IRS1. In terms of processing, ubiquitinated by the Cul7-RING(FBXW8) complex in a mTOR-dependent manner, leading to its degradation: the Cul7-RING(FBXW8) complex recognizes and binds IRS1 previously phosphorylated by S6 kinase (RPS6KB1 or RPS6KB2). Ubiquitinated by TRAF4 through 'Lys-29' linkage; this ubiquitination regulates the interaction of IRS1 with IGFR and IRS1 tyrosine phosphorylation upon IGF1 stimulation. S-nitrosylation at by BLVRB inhibits its activity.

It is found in the cytoplasm. It localises to the nucleus. Functionally, signaling adapter protein that participates in the signal transduction from two prominent receptor tyrosine kinases, insulin receptor/INSR and insulin-like growth factor I receptor/IGF1R. Plays therefore an important role in development, growth, glucose homeostasis as well as lipid metabolism. Upon phosphorylation by the insulin receptor, functions as a signaling scaffold that propagates insulin action through binding to SH2 domain-containing proteins including the p85 regulatory subunit of PI3K, NCK1, NCK2, GRB2 or SHP2. Recruitment of GRB2 leads to the activation of the guanine nucleotide exchange factor SOS1 which in turn triggers the Ras/Raf/MEK/MAPK signaling cascade. Activation of the PI3K/AKT pathway is responsible for most of insulin metabolic effects in the cell, and the Ras/Raf/MEK/MAPK is involved in the regulation of gene expression and in cooperation with the PI3K pathway regulates cell growth and differentiation. Acts a positive regulator of the Wnt/beta-catenin signaling pathway through suppression of DVL2 autophagy-mediated degradation leading to cell proliferation. This Rattus norvegicus (Rat) protein is Insulin receptor substrate 1 (Irs1).